The primary structure comprises 300 residues: Junctional adhesion molecule A (300 aa).

A signal peptide spans 1–26 (MGTEGKAGRKLLFLFTSMILGSLVQG). Topologically, residues 27–238 (KGSVYTAQSD…MDAVELNVGG (212 aa)) are extracellular. Ig-like V-type domains follow at residues 28–122 (GSVY…GEVS) and 134–230 (PTIS…AHMD). The N-linked (GlcNAc...) asparagine glycan is linked to Asn-42. Cystine bridges form between Cys-49-Cys-108 and Cys-152-Cys-212. Asn-185 is a glycosylation site (N-linked (GlcNAc...) asparagine). The chain crosses the membrane as a helical span at residues 239 to 259 (IVAAVLVTLILLGLLIFGVWF). Over 260 to 299 (AYSRGYFERTKKGTAPGKKVIYSQPSTRSEGEFKQTSSFL) the chain is Cytoplasmic. Residues Ser-282, Ser-285, and Ser-288 each carry the phosphoserine modification.

It belongs to the immunoglobulin superfamily. In terms of assembly, interacts with the ninth PDZ domain of MPDZ. Interacts with the first PDZ domain of PARD3. The association between PARD3 and PARD6B probably disrupts this interaction. Interacts with ITGAL (via I-domain). Interacts with CD151.

The protein resides in the cell junction. It localises to the tight junction. The protein localises to the cell membrane. Its function is as follows. Seems to play a role in epithelial tight junction formation. Appears early in primordial forms of cell junctions and recruits PARD3. The association of the PARD6-PARD3 complex may prevent the interaction of PARD3 with JAM1, thereby preventing tight junction assembly. Plays a role in regulating monocyte transmigration involved in integrity of epithelial barrier. Ligand for integrin alpha-L/beta-2 involved in memory T-cell and neutrophil transmigration. Involved in platelet activation. The polypeptide is Junctional adhesion molecule A (F11r) (Mus musculus (Mouse)).